A 156-amino-acid chain; its full sequence is Small ribosomal subunit protein uS7c (156 aa).

This sequence belongs to the universal ribosomal protein uS7 family. In terms of assembly, part of the 30S ribosomal subunit.

It localises to the plastid. Its subcellular location is the chloroplast. In terms of biological role, one of the primary rRNA binding proteins, it binds directly to 16S rRNA where it nucleates assembly of the head domain of the 30S subunit. The protein is Small ribosomal subunit protein uS7c (rps7) of Gracilaria tenuistipitata var. liui (Red alga).